The sequence spans 162 residues: Large ribosomal subunit protein uL11 (162 aa).

The interval M1 to T27 is disordered.

Belongs to the universal ribosomal protein uL11 family. As to quaternary structure, part of the 50S ribosomal subunit. Forms part of the ribosomal stalk which helps the ribosome interact with GTP-bound translation factors. Forms a heptameric L10(L12)2(L12)2(L12)2 complex, where L10 forms an elongated spine to which 3 L12 dimers bind in a sequential fashion.

Functionally, forms part of the ribosomal stalk which helps the ribosome interact with GTP-bound translation factors. In Haloarcula marismortui (strain ATCC 43049 / DSM 3752 / JCM 8966 / VKM B-1809) (Halobacterium marismortui), this protein is Large ribosomal subunit protein uL11.